We begin with the raw amino-acid sequence, 230 residues long: Cytochrome c oxidase subunit 2 (230 aa).

Residues 1 to 14 (MAHPTQLGFKDAAM) are Mitochondrial intermembrane-facing. A helical membrane pass occupies residues 15 to 45 (PVMEELLHFHDHALMIVLLISTLVLYIITAM). Over 46 to 59 (VSTKLTNKYILDSQ) the chain is Mitochondrial matrix. A helical transmembrane segment spans residues 60–87 (EIEIVWTILPAVILVLIALPSLRILYLM). Residues 88 to 230 (DEINDPHLTI…NWSSLMLEDA (143 aa)) lie on the Mitochondrial intermembrane side of the membrane. 6 residues coordinate Cu cation: His161, Cys196, Glu198, Cys200, His204, and Met207. Position 198 (Glu198) interacts with Mg(2+).

The protein belongs to the cytochrome c oxidase subunit 2 family. As to quaternary structure, component of the cytochrome c oxidase (complex IV, CIV), a multisubunit enzyme composed of 14 subunits. The complex is composed of a catalytic core of 3 subunits MT-CO1, MT-CO2 and MT-CO3, encoded in the mitochondrial DNA, and 11 supernumerary subunits COX4I, COX5A, COX5B, COX6A, COX6B, COX6C, COX7A, COX7B, COX7C, COX8 and NDUFA4, which are encoded in the nuclear genome. The complex exists as a monomer or a dimer and forms supercomplexes (SCs) in the inner mitochondrial membrane with NADH-ubiquinone oxidoreductase (complex I, CI) and ubiquinol-cytochrome c oxidoreductase (cytochrome b-c1 complex, complex III, CIII), resulting in different assemblies (supercomplex SCI(1)III(2)IV(1) and megacomplex MCI(2)III(2)IV(2)). Found in a complex with TMEM177, COA6, COX18, COX20, SCO1 and SCO2. Interacts with TMEM177 in a COX20-dependent manner. Interacts with COX20. Interacts with COX16. Cu cation is required as a cofactor.

It is found in the mitochondrion inner membrane. The enzyme catalyses 4 Fe(II)-[cytochrome c] + O2 + 8 H(+)(in) = 4 Fe(III)-[cytochrome c] + 2 H2O + 4 H(+)(out). Component of the cytochrome c oxidase, the last enzyme in the mitochondrial electron transport chain which drives oxidative phosphorylation. The respiratory chain contains 3 multisubunit complexes succinate dehydrogenase (complex II, CII), ubiquinol-cytochrome c oxidoreductase (cytochrome b-c1 complex, complex III, CIII) and cytochrome c oxidase (complex IV, CIV), that cooperate to transfer electrons derived from NADH and succinate to molecular oxygen, creating an electrochemical gradient over the inner membrane that drives transmembrane transport and the ATP synthase. Cytochrome c oxidase is the component of the respiratory chain that catalyzes the reduction of oxygen to water. Electrons originating from reduced cytochrome c in the intermembrane space (IMS) are transferred via the dinuclear copper A center (CU(A)) of subunit 2 and heme A of subunit 1 to the active site in subunit 1, a binuclear center (BNC) formed by heme A3 and copper B (CU(B)). The BNC reduces molecular oxygen to 2 water molecules using 4 electrons from cytochrome c in the IMS and 4 protons from the mitochondrial matrix. This Cyprinus carpio (Common carp) protein is Cytochrome c oxidase subunit 2 (mt-co2).